The primary structure comprises 186 residues: MKLIVGLGNPGREYELTRHNIGFMAIDELAKRWNISLNEQKFKGVFGAGFVNGEKVILLKPLTYMNLSGESIRPLMDYYKIDVEDFVVLYDDLDIPVGKLRLRMKGSAGGHNGVKSTISHLGTQEFQRIRMGIDRPKNGMKVVDYVLGRFTSEEIPGVNHSIEKAADACEEWLNKPFLQIMNTFNS.

Residue Y14 coordinates tRNA. Catalysis depends on H19, which acts as the Proton acceptor. TRNA-binding residues include Y64, N66, and N112.

This sequence belongs to the PTH family. Monomer.

The protein localises to the cytoplasm. It carries out the reaction an N-acyl-L-alpha-aminoacyl-tRNA + H2O = an N-acyl-L-amino acid + a tRNA + H(+). Its function is as follows. Hydrolyzes ribosome-free peptidyl-tRNAs (with 1 or more amino acids incorporated), which drop off the ribosome during protein synthesis, or as a result of ribosome stalling. Functionally, catalyzes the release of premature peptidyl moieties from peptidyl-tRNA molecules trapped in stalled 50S ribosomal subunits, and thus maintains levels of free tRNAs and 50S ribosomes. The sequence is that of Peptidyl-tRNA hydrolase from Bacillus cereus (strain ATCC 10987 / NRS 248).